The primary structure comprises 56 residues: Small ribosomal subunit protein bS21 (56 aa).

It belongs to the bacterial ribosomal protein bS21 family.

This Geobacillus stearothermophilus (Bacillus stearothermophilus) protein is Small ribosomal subunit protein bS21 (rpsU).